We begin with the raw amino-acid sequence, 469 residues long: Ribulose bisphosphate carboxylase large chain (469 aa).

Lys7 carries the N6,N6,N6-trimethyllysine modification. Asn116 and Thr166 together coordinate substrate. Catalysis depends on Lys168, which acts as the Proton acceptor. A substrate-binding site is contributed by Lys170. Residues Lys194, Asp196, and Glu197 each contribute to the Mg(2+) site. Lys194 bears the N6-carboxylysine mark. His287 (proton acceptor) is an active-site residue. Substrate is bound by residues Arg288, His320, and Ser372.

It belongs to the RuBisCO large chain family. Type I subfamily. Heterohexadecamer of 8 large chains and 8 small chains; disulfide-linked. The disulfide link is formed within the large subunit homodimers. Mg(2+) is required as a cofactor. Post-translationally, the disulfide bond which can form in the large chain dimeric partners within the hexadecamer appears to be associated with oxidative stress and protein turnover.

The protein localises to the plastid. It is found in the chloroplast. It catalyses the reaction 2 (2R)-3-phosphoglycerate + 2 H(+) = D-ribulose 1,5-bisphosphate + CO2 + H2O. The catalysed reaction is D-ribulose 1,5-bisphosphate + O2 = 2-phosphoglycolate + (2R)-3-phosphoglycerate + 2 H(+). RuBisCO catalyzes two reactions: the carboxylation of D-ribulose 1,5-bisphosphate, the primary event in carbon dioxide fixation, as well as the oxidative fragmentation of the pentose substrate in the photorespiration process. Both reactions occur simultaneously and in competition at the same active site. This Pachira aquatica (Guiana chestnut) protein is Ribulose bisphosphate carboxylase large chain.